A 212-amino-acid polypeptide reads, in one-letter code: Adenylate kinase (212 aa).

10 to 15 contacts ATP; the sequence is GAGKGT. An NMP region spans residues 30–59; sequence AIGDIFRAIIKTSSKDAEVINSYVEQGKLI. AMP-binding positions include Arg-36, 57–59, 85–88, and Gln-92; these read KLI and GYPR. The segment at 122–160 is LID; it reads GRYSCKSCGKIYNDYFLKPRIDKICDVCKSSVFEYRKDD. Arg-123 is an ATP binding site. Cys-126 and Cys-129 together coordinate Zn(2+). 132 to 133 is a binding site for ATP; the sequence is IY. Zn(2+) contacts are provided by Cys-146 and Cys-149. Residues Arg-157 and Arg-168 each coordinate AMP. Lys-196 contacts ATP.

It belongs to the adenylate kinase family. In terms of assembly, monomer.

Its subcellular location is the cytoplasm. The catalysed reaction is AMP + ATP = 2 ADP. The protein operates within purine metabolism; AMP biosynthesis via salvage pathway; AMP from ADP: step 1/1. Catalyzes the reversible transfer of the terminal phosphate group between ATP and AMP. Plays an important role in cellular energy homeostasis and in adenine nucleotide metabolism. The chain is Adenylate kinase from Rickettsia bellii (strain RML369-C).